Consider the following 151-residue polypeptide: 1,4-dihydroxy-2-naphthoyl-CoA hydrolase (151 aa).

Residue Asp-19 is part of the active site.

Belongs to the 4-hydroxybenzoyl-CoA thioesterase family. DHNA-CoA hydrolase subfamily.

The enzyme catalyses 1,4-dihydroxy-2-naphthoyl-CoA + H2O = 1,4-dihydroxy-2-naphthoate + CoA + H(+). It participates in cofactor biosynthesis; phylloquinone biosynthesis. Its pathway is quinol/quinone metabolism; 1,4-dihydroxy-2-naphthoate biosynthesis; 1,4-dihydroxy-2-naphthoate from chorismate: step 7/7. Catalyzes the hydrolysis of 1,4-dihydroxy-2-naphthoyl-CoA (DHNA-CoA) to 1,4-dihydroxy-2-naphthoate (DHNA), a reaction involved in phylloquinone (vitamin K1) biosynthesis. This is 1,4-dihydroxy-2-naphthoyl-CoA hydrolase from Prochlorococcus marinus (strain MIT 9303).